The primary structure comprises 243 residues: 4-hydroxy-tetrahydrodipicolinate reductase (243 aa).

NAD(+)-binding positions include 9–14 (GANGKM), 78–80 (GTS), and 104–107 (APNF). The active-site Proton donor/acceptor is histidine 134. Histidine 135 provides a ligand contact to (S)-2,3,4,5-tetrahydrodipicolinate. The active-site Proton donor is lysine 138. 144-145 (GT) is a binding site for (S)-2,3,4,5-tetrahydrodipicolinate.

This sequence belongs to the DapB family.

The protein localises to the cytoplasm. The catalysed reaction is (S)-2,3,4,5-tetrahydrodipicolinate + NAD(+) + H2O = (2S,4S)-4-hydroxy-2,3,4,5-tetrahydrodipicolinate + NADH + H(+). The enzyme catalyses (S)-2,3,4,5-tetrahydrodipicolinate + NADP(+) + H2O = (2S,4S)-4-hydroxy-2,3,4,5-tetrahydrodipicolinate + NADPH + H(+). Its pathway is amino-acid biosynthesis; L-lysine biosynthesis via DAP pathway; (S)-tetrahydrodipicolinate from L-aspartate: step 4/4. Functionally, catalyzes the conversion of 4-hydroxy-tetrahydrodipicolinate (HTPA) to tetrahydrodipicolinate. This chain is 4-hydroxy-tetrahydrodipicolinate reductase, found in Legionella pneumophila subsp. pneumophila (strain Philadelphia 1 / ATCC 33152 / DSM 7513).